A 456-amino-acid chain; its full sequence is GTPase Der (456 aa).

EngA-type G domains are found at residues 2-167 (LKVA…DQFG) and 176-351 (ATFC…AQLK). Residues 8–15 (GKPNVGKS), 55–59 (DTGGL), 118–121 (NKIE), 182–189 (GKPNVGKS), 229–233 (DTAGI), and 294–297 (NKWD) each bind GTP. The KH-like domain occupies 352–436 (IKISTSLLND…PITLYFKSKN (85 aa)).

Belongs to the TRAFAC class TrmE-Era-EngA-EngB-Septin-like GTPase superfamily. EngA (Der) GTPase family. As to quaternary structure, associates with the 50S ribosomal subunit.

GTPase that plays an essential role in the late steps of ribosome biogenesis. The sequence is that of GTPase Der from Mycoplasmoides gallisepticum (strain R(low / passage 15 / clone 2)) (Mycoplasma gallisepticum).